The chain runs to 262 residues: Phosphate import ATP-binding protein PstB (262 aa).

An ABC transporter domain is found at 16-257; that stretch reads IDVRNLNFYY…PHRKETEDYI (242 aa). Residue 48–55 participates in ATP binding; that stretch reads GPSGCGKS.

It belongs to the ABC transporter superfamily. Phosphate importer (TC 3.A.1.7) family. The complex is composed of two ATP-binding proteins (PstB), two transmembrane proteins (PstC and PstA) and a solute-binding protein (PstS).

It is found in the cell inner membrane. It catalyses the reaction phosphate(out) + ATP + H2O = ADP + 2 phosphate(in) + H(+). Functionally, part of the ABC transporter complex PstSACB involved in phosphate import. Responsible for energy coupling to the transport system. This chain is Phosphate import ATP-binding protein PstB, found in Cupriavidus pinatubonensis (strain JMP 134 / LMG 1197) (Cupriavidus necator (strain JMP 134)).